Reading from the N-terminus, the 943-residue chain is Synaptotagmin-like protein 2 (943 aa).

Residues 1 to 57 enclose the RabBD domain; the sequence is MIDLSFLTEEEQEAIMKVLQRDAALKRAEEERVRHLPEKVKDDQQLKNMSGQWFYEA. 3 disordered regions span residues 77–99, 118–291, and 361–613; these read RKKR…KESW, EEPE…VRFH, and ESDR…SNSG. Positions 82 to 99 are enriched in basic and acidic residues; it reads QVADEQSKDRANRAKESW. Low complexity predominate over residues 125–138; it reads APASPSSSVVNPVS. The span at 174–192 shows a compositional bias: polar residues; sequence SQQTKNEQSKNGKTGLFQT. Over residues 194-205 the composition is skewed to basic and acidic residues; that stretch reads KEGELSESKEES. 3 stretches are compositionally biased toward polar residues: residues 382 to 394, 404 to 416, and 426 to 440; these read PQPS…LPFQ, KNET…SGSF, and EFLT…NSHT. Residues 524 to 537 are compositionally biased toward basic and acidic residues; that stretch reads ELVRSAEDDQKADQ. The segment covering 549–560 has biased composition (polar residues); that stretch reads STVSSQPDNQFS. The span at 603–613 shows a compositional bias: low complexity; the sequence is SSLTNLSSNSG. 2 C2 domains span residues 637-762 and 777-906; these read VKGS…LKWY and NRGE…VDWM.

Monomer. Binds NRXN1. Binds RAB27A that has been activated by GTP-binding via its N-terminus. Interacts with RAB27B.

The protein localises to the cell membrane. Its function is as follows. May act as a RAB27A effector protein and play a role in cytotoxic granule exocytosis in lymphocytes. The sequence is that of Synaptotagmin-like protein 2 (SYTL2) from Bos taurus (Bovine).